The sequence spans 211 residues: Protein-L-isoaspartate O-methyltransferase (211 aa).

S60 is a catalytic residue.

It belongs to the methyltransferase superfamily. L-isoaspartyl/D-aspartyl protein methyltransferase family.

The protein resides in the cytoplasm. The enzyme catalyses [protein]-L-isoaspartate + S-adenosyl-L-methionine = [protein]-L-isoaspartate alpha-methyl ester + S-adenosyl-L-homocysteine. Catalyzes the methyl esterification of L-isoaspartyl residues in peptides and proteins that result from spontaneous decomposition of normal L-aspartyl and L-asparaginyl residues. It plays a role in the repair and/or degradation of damaged proteins. The sequence is that of Protein-L-isoaspartate O-methyltransferase from Pseudomonas fluorescens (strain SBW25).